The following is a 400-amino-acid chain: Vitamin K-dependent protein Z (400 aa).

An N-terminal signal peptide occupies residues 1-23 (MAGCVPLLQGLVLVLALHRVEPS). Positions 24 to 40 (VFLPASKANDVLVRWKR) are excised as a propeptide. One can recognise a Gla domain in the interval 41–86 (AGSYLLEELFEGNLEKECYEEICVYEEAREVFENEVVTDEFWRRYK). 13 positions are modified to 4-carboxyglutamate: glutamate 47, glutamate 48, glutamate 51, glutamate 55, glutamate 57, glutamate 60, glutamate 61, glutamate 66, glutamate 67, glutamate 70, glutamate 73, glutamate 75, and glutamate 80. Cysteine 58 and cysteine 63 are oxidised to a cystine. 2 consecutive EGF-like domains span residues 87 to 123 (GGSP…SNCE) and 125 to 166 (AKNE…KQCV). Intrachain disulfides connect cysteine 91/cysteine 102, cysteine 96/cysteine 111, cysteine 113/cysteine 122, cysteine 129/cysteine 141, cysteine 137/cysteine 150, cysteine 152/cysteine 165, and cysteine 203/cysteine 219. Serine 93 carries an O-linked (Glc...) serine glycan. Asparagine 99 carries an N-linked (GlcNAc...) asparagine glycan. At aspartate 104 the chain carries (3R)-3-hydroxyaspartate. Residues 175–400 (VLTSEKRAPD…YSLWFKQIMN (226 aa)) enclose the Peptidase S1 domain. N-linked (GlcNAc...) asparagine glycans are attached at residues asparagine 225, asparagine 233, asparagine 306, and asparagine 332. The cysteines at positions 327 and 341 are disulfide-linked.

Belongs to the peptidase S1 family. As to quaternary structure, interacts with SERPINA10. In terms of processing, the iron and 2-oxoglutarate dependent 3-hydroxylation of aspartate and asparagine is (R) stereospecific within EGF domains. As to expression, plasma.

The protein localises to the secreted. Its function is as follows. Appears to assist hemostasis by binding thrombin and promoting its association with phospholipid vesicles. Inhibits activity of the coagulation protease factor Xa in the presence of SERPINA10, calcium and phospholipids. The sequence is that of Vitamin K-dependent protein Z (PROZ) from Homo sapiens (Human).